A 176-amino-acid polypeptide reads, in one-letter code: Dual specificity phosphatase 28 (176 aa).

The Tyrosine-protein phosphatase domain occupies 17–159 (PPLVRVAPSL…LQKYEEALQA (143 aa)). The Phosphocysteine intermediate role is filled by C103.

The protein belongs to the protein-tyrosine phosphatase family. Non-receptor class dual specificity subfamily. As to quaternary structure, monomer.

It carries out the reaction O-phospho-L-tyrosyl-[protein] + H2O = L-tyrosyl-[protein] + phosphate. The enzyme catalyses O-phospho-L-seryl-[protein] + H2O = L-seryl-[protein] + phosphate. The catalysed reaction is O-phospho-L-threonyl-[protein] + H2O = L-threonyl-[protein] + phosphate. Functionally, has phosphatase activity with the synthetic substrate 6,8-difluoro-4-methylumbelliferyl phosphate (in vitro). Has almost no detectable activity with phosphotyrosine, even less activity with phosphothreonine and displays complete lack of activity with phosphoserine. The poor activity with phosphotyrosine may be due to steric hindrance by bulky amino acid sidechains that obstruct access to the active site. In Homo sapiens (Human), this protein is Dual specificity phosphatase 28 (DUSP28).